The chain runs to 498 residues: Galactose-1-phosphate uridylyltransferase (498 aa).

The protein belongs to the galactose-1-phosphate uridylyltransferase type 2 family.

It is found in the cytoplasm. It carries out the reaction alpha-D-galactose 1-phosphate + UDP-alpha-D-glucose = alpha-D-glucose 1-phosphate + UDP-alpha-D-galactose. It functions in the pathway carbohydrate metabolism; galactose metabolism. This Clostridium perfringens (strain SM101 / Type A) protein is Galactose-1-phosphate uridylyltransferase.